Here is a 103-residue protein sequence, read N- to C-terminus: Phosphoribosyl-ATP pyrophosphatase (103 aa).

It belongs to the PRA-PH family.

It is found in the cytoplasm. The enzyme catalyses 1-(5-phospho-beta-D-ribosyl)-ATP + H2O = 1-(5-phospho-beta-D-ribosyl)-5'-AMP + diphosphate + H(+). The protein operates within amino-acid biosynthesis; L-histidine biosynthesis; L-histidine from 5-phospho-alpha-D-ribose 1-diphosphate: step 2/9. This chain is Phosphoribosyl-ATP pyrophosphatase (hisE), found in Rhodobacter capsulatus (strain ATCC BAA-309 / NBRC 16581 / SB1003).